The chain runs to 493 residues: Guanosine-5'-triphosphate,3'-diphosphate pyrophosphatase (493 aa).

It belongs to the GppA/Ppx family. GppA subfamily.

It carries out the reaction guanosine 3'-diphosphate 5'-triphosphate + H2O = guanosine 3',5'-bis(diphosphate) + phosphate + H(+). It participates in purine metabolism; ppGpp biosynthesis; ppGpp from GTP: step 2/2. Catalyzes the conversion of pppGpp to ppGpp. Guanosine pentaphosphate (pppGpp) is a cytoplasmic signaling molecule which together with ppGpp controls the 'stringent response', an adaptive process that allows bacteria to respond to amino acid starvation, resulting in the coordinated regulation of numerous cellular activities. The sequence is that of Guanosine-5'-triphosphate,3'-diphosphate pyrophosphatase from Salmonella paratyphi A (strain ATCC 9150 / SARB42).